The primary structure comprises 399 residues: Putative endoplasmin-like protein (399 aa).

A Glycyl lysine isopeptide (Lys-Gly) (interchain with G-Cter in SUMO2) cross-link involves residue Lys130. The interval 350–399 (LDLAVVEEPDEEPEETAEDKEQDKDKEMDVGTDEEKQETAKESTAEKDEL) is disordered. Positions 354–367 (VVEEPDEEPEETAE) are enriched in acidic residues. The segment covering 368-399 (DKEQDKDKEMDVGTDEEKQETAKESTAEKDEL) has biased composition (basic and acidic residues).

This sequence belongs to the heat shock protein 90 family.

Its function is as follows. Putative molecular chaperone. This chain is Putative endoplasmin-like protein (HSP90B2P), found in Homo sapiens (Human).